A 461-amino-acid chain; its full sequence is Transcription factor SOX-10 (461 aa).

Disordered regions lie at residues 1–60 (MADD…ADDD), 154–191 (LRMQ…GEAG), 205–268 (LDHR…DFGN), 350–369 (KAQV…DQPS), and 433–461 (AISD…LSRP). The segment covering 30–42 (ASDNSSHLASSGN) has biased composition (polar residues). A dimerization (DIM) region spans residues 56-96 (EADDDKFPVCIREAVSQVLSGYDWTLVPMPVRVNGSNKSKP). Positions 98–166 (VKRPMNAFMV…QHKKDHPDYK (69 aa)) form a DNA-binding region, HMG box. Over residues 154–167 (LRMQHKKDHPDYKY) the composition is skewed to basic and acidic residues. Residues 181-191 (EGEGQVEGEAG) are compositionally biased toward gly residues. A transactivation domain (TAM) region spans residues 221-306 (PEHSSGQSHG…NGHAGHPGHV (86 aa)). The span at 247–264 (ADSKREGRSLGEGGKPHI) shows a compositional bias: basic and acidic residues. The tract at residues 350–461 (KAQVKTEGSA…QPVYTTLSRP (112 aa)) is transactivation domain (TAC). Over residues 441–461 (VPQSHSPTHWEQPVYTTLSRP) the composition is skewed to polar residues.

It is found in the cytoplasm. The protein localises to the nucleus. Functionally, transcription factor that plays a central role in developing and mature glia. Specifically activates expression of myelin genes, during oligodendrocyte (OL) maturation, thereby playing a central role in oligodendrocyte maturation and CNS myelination. The sequence is that of Transcription factor SOX-10 (SOX10) from Gallus gallus (Chicken).